Here is a 280-residue protein sequence, read N- to C-terminus: Lysosome-associated membrane glycoprotein 5 (280 aa).

The first 29 residues, 1–29, serve as a signal peptide directing secretion; it reads MDLQGRGVPSIDRLRVLLMLFHTMAQIMA. Over 30-235 the chain is Extracellular; the sequence is EQEVENLSGL…PVDEREQLEE (206 aa). Asn-35, Asn-53, and Asn-127 each carry an N-linked (GlcNAc...) asparagine glycan. The helical transmembrane segment at 236 to 256 threads the bilayer; it reads TLPLILGLILGLVIMVTLAIY. Residues 257–280 lie on the Cytoplasmic side of the membrane; the sequence is HVHHKMTANQVQIPRDRSQYKHMG.

The protein belongs to the LAMP family. In terms of processing, glycosylated. As to expression, expressed in plasmocytoid dendritic cells. Expressed in suprabasal skin keratinocytes and squamous cells (at protein level). Expressed in the brain and weakly in spleen and skin. Expressed in plasmocytoid dendritic cells.

It localises to the cell membrane. Its subcellular location is the cytoplasmic vesicle. The protein resides in the secretory vesicle. The protein localises to the synaptic vesicle membrane. It is found in the endoplasmic reticulum-Golgi intermediate compartment membrane. It localises to the endosome membrane. Its subcellular location is the cytoplasmic vesicle membrane. The protein resides in the cell projection. The protein localises to the dendrite. It is found in the growth cone membrane. It localises to the early endosome membrane. Its subcellular location is the recycling endosome. In terms of biological role, plays a role in short-term synaptic plasticity in a subset of GABAergic neurons in the brain. This is Lysosome-associated membrane glycoprotein 5 (LAMP5) from Homo sapiens (Human).